A 284-amino-acid chain; its full sequence is MSALSIISIIIGWIYFACWSLSFYPQVILNFRKKNVIGLSFDFLLFNITGYACYSVFNSVLYFDKLVKNEYYDKYGPPIPVQQSDIAFAIHGFVLTAITIIQCFIYDRGNQKNSKLGIGIATLIWVSLIVMTILGFSNVFTWLWVINYYSYVKLFITFIKYIPQAYLNFKNKSTSGWSVHNVLLDFSGGVLSLLQMFLDVADSGNWNIFTGDPVKLGLSLFSIAFDILFIIQHYILYRNPKSKGYQNLNDNNIPNNNNNNNNNINNNTPHQIIINNSLIGEEDQ.

A run of 7 helical transmembrane segments spans residues 3-23 (ALSI…SLSF), 37-57 (IGLS…YSVF), 86-106 (IAFA…CFIY), 116-136 (LGIG…ILGF), 139-159 (VFTW…ITFI), 181-201 (NVLL…LDVA), and 216-236 (LGLS…HYIL). A PQ-loop 1 domain is found at 4-70 (LSIISIIIGW…LYFDKLVKNE (67 aa)). The PQ-loop 2 domain occupies 154–208 (LFITFIKYIPQAYLNFKNKSTSGWSVHNVLLDFSGGVLSLLQMFLDVADSGNWNI). Residues 247-269 (NLNDNNIPNNNNNNNNNINNNTP) are disordered.

The protein belongs to the cystinosin family.

It localises to the lysosome membrane. The catalysed reaction is L-cystine(out) + H(+)(out) = L-cystine(in) + H(+)(in). Cystine/H(+) symporter that mediates export of cystine, the oxidized dimer of cysteine, from lysosomes. This Dictyostelium discoideum (Social amoeba) protein is Cystinosin homolog (ctns).